Reading from the N-terminus, the 86-residue chain is Large ribosomal subunit protein bL31B (86 aa).

The protein belongs to the bacterial ribosomal protein bL31 family. Type B subfamily. Part of the 50S ribosomal subunit.

This chain is Large ribosomal subunit protein bL31B, found in Burkholderia cenocepacia (strain ATCC BAA-245 / DSM 16553 / LMG 16656 / NCTC 13227 / J2315 / CF5610) (Burkholderia cepacia (strain J2315)).